The sequence spans 218 residues: Large ribosomal subunit protein uL3 (218 aa).

A disordered region spans residues 133–158; sequence RGQGASHGAQAVHRRPGSIGGCATPG.

Belongs to the universal ribosomal protein uL3 family. As to quaternary structure, part of the 50S ribosomal subunit. Forms a cluster with proteins L14 and L19.

Its function is as follows. One of the primary rRNA binding proteins, it binds directly near the 3'-end of the 23S rRNA, where it nucleates assembly of the 50S subunit. The sequence is that of Large ribosomal subunit protein uL3 from Mycolicibacterium vanbaalenii (strain DSM 7251 / JCM 13017 / BCRC 16820 / KCTC 9966 / NRRL B-24157 / PYR-1) (Mycobacterium vanbaalenii).